The chain runs to 794 residues: Mitochondrial intermediate peptidase (794 aa).

Residues 1–39 (MRVTSSRLLQGGSLVSRVLKRRLNNASRTKKGWFSTRTL) constitute a mitochondrion transit peptide. His-581 contacts Zn(2+). Glu-582 is an active-site residue. His-585 and His-588 together coordinate Zn(2+).

Belongs to the peptidase M3 family. Requires Zn(2+) as cofactor.

It localises to the mitochondrion matrix. The catalysed reaction is Release of an N-terminal octapeptide as second stage of processing of some proteins imported into the mitochondrion.. Cleaves proteins, imported into the mitochondrion, to their mature size. While most mitochondrial precursor proteins are processed to the mature form in one step by mitochondrial processing peptidase (MPP), the sequential cleavage by MIP of an octapeptide after initial processing by MPP is a required step for a subgroup of nuclear-encoded precursor proteins destined for the matrix or the inner membrane. This Debaryomyces hansenii (strain ATCC 36239 / CBS 767 / BCRC 21394 / JCM 1990 / NBRC 0083 / IGC 2968) (Yeast) protein is Mitochondrial intermediate peptidase (OCT1).